The sequence spans 271 residues: Formamidopyrimidine-DNA glycosylase (271 aa).

P2 (schiff-base intermediate with DNA) is an active-site residue. The active-site Proton donor is the E3. The Proton donor; for beta-elimination activity role is filled by K58. Residues H91, R110, and R152 each coordinate DNA. The FPG-type zinc-finger motif lies at 237–271 (QIYGRSAHPCPICGTPIRLERIGQRASYYCTQCQH). R261 acts as the Proton donor; for delta-elimination activity in catalysis.

It belongs to the FPG family. In terms of assembly, monomer. Zn(2+) serves as cofactor.

The enzyme catalyses Hydrolysis of DNA containing ring-opened 7-methylguanine residues, releasing 2,6-diamino-4-hydroxy-5-(N-methyl)formamidopyrimidine.. It carries out the reaction 2'-deoxyribonucleotide-(2'-deoxyribose 5'-phosphate)-2'-deoxyribonucleotide-DNA = a 3'-end 2'-deoxyribonucleotide-(2,3-dehydro-2,3-deoxyribose 5'-phosphate)-DNA + a 5'-end 5'-phospho-2'-deoxyribonucleoside-DNA + H(+). In terms of biological role, involved in base excision repair of DNA damaged by oxidation or by mutagenic agents. Acts as a DNA glycosylase that recognizes and removes damaged bases. Has a preference for oxidized purines, such as 7,8-dihydro-8-oxoguanine (8-oxoG). Has AP (apurinic/apyrimidinic) lyase activity and introduces nicks in the DNA strand. Cleaves the DNA backbone by beta-delta elimination to generate a single-strand break at the site of the removed base with both 3'- and 5'-phosphates. This chain is Formamidopyrimidine-DNA glycosylase, found in Nitrosococcus oceani (strain ATCC 19707 / BCRC 17464 / JCM 30415 / NCIMB 11848 / C-107).